The chain runs to 233 residues: 2-C-methyl-D-erythritol 4-phosphate cytidylyltransferase (233 aa).

The protein belongs to the IspD/TarI cytidylyltransferase family. IspD subfamily.

The enzyme catalyses 2-C-methyl-D-erythritol 4-phosphate + CTP + H(+) = 4-CDP-2-C-methyl-D-erythritol + diphosphate. It participates in isoprenoid biosynthesis; isopentenyl diphosphate biosynthesis via DXP pathway; isopentenyl diphosphate from 1-deoxy-D-xylulose 5-phosphate: step 2/6. Its function is as follows. Catalyzes the formation of 4-diphosphocytidyl-2-C-methyl-D-erythritol from CTP and 2-C-methyl-D-erythritol 4-phosphate (MEP). In Carboxydothermus hydrogenoformans (strain ATCC BAA-161 / DSM 6008 / Z-2901), this protein is 2-C-methyl-D-erythritol 4-phosphate cytidylyltransferase.